The sequence spans 302 residues: Sushi domain-containing protein 6 (302 aa).

The N-terminal stretch at 1–39 is a signal peptide; that stretch reads MCHGKIAPKSSSEFVVTSVGHGVFLQLVILCALLGDGLA. The Sushi domain occupies 40-104; that stretch reads SVCPLPPEPE…TPAMEVSCHL (65 aa). 2 disulfides stabilise this stretch: Cys-42–Cys-89 and Cys-74–Cys-102. The chain crosses the membrane as a helical span at residues 120-140; that stretch reads IVASTASSVALILLLVVLFVL. 2 disordered regions span residues 202 to 241 and 256 to 302; these read GSAP…CEAW and TSSW…LKEA. Polar residues-rich tracts occupy residues 212-222, 256-267, and 279-290; these read REQQLQGQEAC, TSSWVAGSGSSR, and SDIQSLLSLTSE.

The protein resides in the membrane. May play a role in growth-suppressive activity and cell death. May be involved in the production of chemokine molecules in umbilical vein endothelial cells (HUVECs) cultured in THP1 monocyte LPS-induced medium. Plays a role in preventing tumor onset. In Mus musculus (Mouse), this protein is Sushi domain-containing protein 6.